We begin with the raw amino-acid sequence, 297 residues long: Aspartate dehydrogenase domain-containing protein (297 aa).

2 positions are modified to phosphoserine: Ser24 and Ser172.

The protein belongs to the L-aspartate dehydrogenase family.

The polypeptide is Aspartate dehydrogenase domain-containing protein (Rattus norvegicus (Rat)).